A 125-amino-acid chain; its full sequence is Casein kinase I isoform alpha (125 aa).

The Protein kinase domain occupies 1-125 (GEEVAVKLES…LIDFGLAKKY (125 aa)). Residue Lys-7 coordinates ATP. Asp-97 serves as the catalytic Proton acceptor.

The protein belongs to the protein kinase superfamily. CK1 Ser/Thr protein kinase family. Casein kinase I subfamily. As to quaternary structure, interacts with the Axin complex. Interacts with TUT1, leading to TUT1 phosphorylation. Interacts with FAM83A, FAM83B, FAM83C, FAM83D, FAM83E, FAM83F, FAM83G and FAM83H (via DUF1669). Interaction with FAM83H recruits CSNK1A1 to keratin filaments. In terms of processing, phosphorylated by MTOR in response to mitogenic stimulation, leading to its activation.

The protein resides in the cytoplasm. Its subcellular location is the cytoskeleton. It is found in the microtubule organizing center. It localises to the centrosome. The protein localises to the chromosome. The protein resides in the centromere. Its subcellular location is the kinetochore. It is found in the nucleus speckle. It localises to the cilium basal body. The protein localises to the spindle. It catalyses the reaction L-seryl-[protein] + ATP = O-phospho-L-seryl-[protein] + ADP + H(+). The catalysed reaction is L-threonyl-[protein] + ATP = O-phospho-L-threonyl-[protein] + ADP + H(+). Casein kinases are operationally defined by their preferential utilization of acidic proteins such as caseins as substrates. It can phosphorylate a large number of proteins. Participates in Wnt signaling. Phosphorylates CTNNB1 at 'Ser-45'. May phosphorylate PER1 and PER2. May play a role in segregating chromosomes during mitosis. May play a role in keratin cytoskeleton disassembly and thereby, it may regulate epithelial cell migration. Acts as a positive regulator of mTORC1 and mTORC2 signaling in response to nutrients by mediating phosphorylation of DEPTOR inhibitor. Acts as an inhibitor of NLRP3 inflammasome assembly by mediating phosphorylation of NLRP3. This Sus scrofa (Pig) protein is Casein kinase I isoform alpha (CSNK1A1).